The sequence spans 282 residues: HTH-type transcriptional activator RhaR (282 aa).

An HTH araC/xylS-type domain is found at 179-277 (DKLITALANS…GMTPSQWRHL (99 aa)). DNA-binding regions (H-T-H motif) lie at residues 196-217 (DAFC…RAQT) and 244-267 (ISEI…TRET).

Binds DNA as a dimer.

It localises to the cytoplasm. Its function is as follows. Activates expression of the rhaSR operon in response to L-rhamnose. The sequence is that of HTH-type transcriptional activator RhaR from Salmonella agona (strain SL483).